The chain runs to 91 residues: MSITQERKQELIKNYAINDNDTGSSAVQCAILTERINNLTEHFKSNHKDHTSRRGLLILVGRRRRLLNYIKKKNVSEYLDLISKLGIRKIK.

The protein belongs to the universal ribosomal protein uS15 family. As to quaternary structure, part of the 30S ribosomal subunit. Forms a bridge to the 50S subunit in the 70S ribosome, contacting the 23S rRNA.

In terms of biological role, one of the primary rRNA binding proteins, it binds directly to 16S rRNA where it helps nucleate assembly of the platform of the 30S subunit by binding and bridging several RNA helices of the 16S rRNA. Forms an intersubunit bridge (bridge B4) with the 23S rRNA of the 50S subunit in the ribosome. The chain is Small ribosomal subunit protein uS15 from Rickettsia bellii (strain OSU 85-389).